The following is a 199-amino-acid chain: BREX protein BrxA (199 aa).

Belongs to the BrxA family.

BREX systems (bacteriophage exclusion) provide immunity against bacteriophage. Part of a type 1 BREX system which protects against dsDNA phage. This system allows phage adsorption but prevents phage DNA replication, without degradation of the phage DNA. Methylation of bacterial DNA by PglX guides self/non-self discrimination. The polypeptide is BREX protein BrxA (Paramagnetospirillum magneticum (strain ATCC 700264 / AMB-1) (Magnetospirillum magneticum)).